Reading from the N-terminus, the 248-residue chain is Pyruvate formate-lyase-activating enzyme (248 aa).

In terms of domain architecture, Radical SAM core spans 17 to 248 (VDGPGIRFIV…NKILETSSYK (232 aa)). The [4Fe-4S] cluster site is built by Cys-31, Cys-35, and Cys-38. S-adenosyl-L-methionine contacts are provided by residues 37-39 (FCH), Gly-80, 135-137 (DIK), and His-208.

The protein belongs to the organic radical-activating enzymes family. It depends on [4Fe-4S] cluster as a cofactor.

It localises to the cytoplasm. It carries out the reaction glycyl-[formate C-acetyltransferase] + reduced [flavodoxin] + S-adenosyl-L-methionine = glycin-2-yl radical-[formate C-acetyltransferase] + semiquinone [flavodoxin] + 5'-deoxyadenosine + L-methionine + H(+). In terms of biological role, activation of pyruvate formate-lyase under anaerobic conditions by generation of an organic free radical, using S-adenosylmethionine and reduced flavodoxin as cosubstrates to produce 5'-deoxy-adenosine. This chain is Pyruvate formate-lyase-activating enzyme (pflA), found in Listeria innocua serovar 6a (strain ATCC BAA-680 / CLIP 11262).